We begin with the raw amino-acid sequence, 72 residues long: Translational regulator CsrA (72 aa).

This sequence belongs to the CsrA/RsmA family. As to quaternary structure, homodimer; the beta-strands of each monomer intercalate to form a hydrophobic core, while the alpha-helices form wings that extend away from the core.

The protein localises to the cytoplasm. A translational regulator that binds mRNA to regulate translation initiation and/or mRNA stability. Usually binds in the 5'-UTR at or near the Shine-Dalgarno sequence preventing ribosome-binding, thus repressing translation. Its main target seems to be the major flagellin gene, while its function is anatagonized by FliW. This Clostridium botulinum (strain ATCC 19397 / Type A) protein is Translational regulator CsrA.